A 149-amino-acid polypeptide reads, in one-letter code: MADQLTDDQISEFKEAFSLFDKDGDGCITTKELGTVMRSLGQNPTEAELQDMINEVDADGNGTIDFPEFLNLMARKMKDTDSEEELKEAFRVFDKDQNGFISAAELRHVMTNLGEKLTDEEVDEMIREADVDGDGQINYEEFVKVMMAK.

N-acetylalanine is present on A2. EF-hand domains follow at residues 8-43 (DQIS…LGQN), 44-79 (PTEA…KMKD), 81-116 (DSEE…LGEK), and 117-149 (LTDE…MMAK). D21, D23, D25, C27, E32, D57, D59, N61, T63, E68, D94, D96, N98, and E105 together coordinate Ca(2+). K116 is subject to N6,N6,N6-trimethyllysine. The Ca(2+) site is built by D130, D132, D134, Q136, and E141.

The protein belongs to the calmodulin family.

Its function is as follows. Calmodulin mediates the control of a large number of enzymes, ion channels and other proteins by Ca(2+). Among the enzymes to be stimulated by the calmodulin-Ca(2+) complex are a number of protein kinases and phosphatases. The protein is Calmodulin-1 (CAM81) of Petunia hybrida (Petunia).